The chain runs to 369 residues: MNTQSQTIVVKLGTSVLTGGTLKLDRAHMVELVRQCVHLKKLGHQVIVVTSGAIAAGREHLNYPELPKTMANKQLLAAVGQSCLIQAWQSLFAIYGVNVGQMLLTRADLDDRERYLNARDMLQALLKNGIVPIVNENDAVATNEIKVGDNDNLSALVGILASADKLLLLTDQSGLFTADPRKDPKAELIKEVHTIDETLRKIAGGSGTALGTGGMATKLQAADIARRAGIEVVIAAGSAENVITDVVDSKPQGTKFLPVECALESRKRWILAGPASNGTIVIDDGAVNAVQQKGSSLLSKGISSISGHFVRGGVAKIVNTKGELIARGISRYSSDDLHKILGKHSQDIYAVLGYEYGPVAIHRDDLVLI.

Lys11 contributes to the ATP binding site. Substrate contacts are provided by Ser51, Asp138, and Asn150. Residues 170–171 and 212–218 contribute to the ATP site; these read TD and TGGMATK. The 79-residue stretch at 277–355 folds into the PUA domain; it reads NGTIVIDDGA…QDIYAVLGYE (79 aa).

The protein belongs to the glutamate 5-kinase family.

It is found in the cytoplasm. The enzyme catalyses L-glutamate + ATP = L-glutamyl 5-phosphate + ADP. It participates in amino-acid biosynthesis; L-proline biosynthesis; L-glutamate 5-semialdehyde from L-glutamate: step 1/2. Functionally, catalyzes the transfer of a phosphate group to glutamate to form L-glutamate 5-phosphate. This chain is Glutamate 5-kinase, found in Aliivibrio salmonicida (strain LFI1238) (Vibrio salmonicida (strain LFI1238)).